The chain runs to 184 residues: Cbp/p300-interacting transactivator 4 (184 aa).

Residues 18–28 (PSAAAAHGPHA) are compositionally biased toward low complexity. 2 disordered regions span residues 18-67 (PSAA…YGAF) and 94-128 (TPYPGRAAAPPNAPGGPPGPQPAPSAAAPPPPAHA). Over residues 104-126 (PNAPGGPPGPQPAPSAAAPPPPA) the composition is skewed to pro residues.

The protein belongs to the CITED family. As to quaternary structure, interacts via its C-terminal region with the CH1 domain of CREBBP and EP300. Interacts with all TFAP2/AP-2 isoforms. In terms of tissue distribution, expressed in most tissues examined with highest levels of expression in heart, liver, skeletal muscle and pancreas. Also expressed in bladder cell line ECV-304 and in various breast cancer cell lines. Also detected in both in situ and invasive breast tumors where its expression is down-regulated and mostly restricted to the cytoplasm of malignant epithelium. Down-regulation of expression is associated with elevated levels of HIF1A and increased tumor growth and angiogenesis.

It localises to the nucleus. The protein resides in the cytoplasm. Acts as a transcriptional coactivator for TFAP2/AP-2. Enhances estrogen-dependent transactivation mediated by estrogen receptors. May function as an inhibitor of transactivation by HIF1A by disrupting HIF1A interaction with CREBBP. May be involved in regulation of gene expression during development and differentiation of blood cells, endothelial cells and mammary epithelial cells. The sequence is that of Cbp/p300-interacting transactivator 4 from Homo sapiens (Human).